The primary structure comprises 94 residues: Late cornified envelope protein 3C (94 aa).

Residues 1–10 (MSCQQNQQQC) are compositionally biased toward low complexity. 2 disordered regions span residues 1-35 (MSCQ…PPSS) and 65-94 (CRRQ…GGCC). Residues 11–34 (QPPPSCPSPKCPPKSPAQCLPPPS) show a composition bias toward pro residues. Over residues 78 to 94 (GQQGGGSCRGHGSGGCC) the composition is skewed to gly residues.

It belongs to the LCE family. Interacts with CYSRT1; the interaction is direct. In terms of tissue distribution, skin-specific. Expression was readily detected in adult trunk skin, adult arm skin, fetal skin, penal skin, vulva, esophagus and tongue. Not expressed in the cervix, rectum, lung, colon, or placenta.

In terms of biological role, a structural component of the cornified envelope of the stratum corneum involved in innate cutaneous host defense. Possesses defensin-like antimicrobial activity against a broad spectrum of Gram-positive and Gram-negative bacteria, both aerobic and anaerobic species. Upon inflammation, may regulate skin barrier repair by shaping cutaneous microbiota composition and immune response to bacterial antigens. The chain is Late cornified envelope protein 3C from Homo sapiens (Human).